Reading from the N-terminus, the 530-residue chain is Bifunctional purine biosynthesis protein PurH (530 aa).

The MGS-like domain occupies 1-148 (MNNARPIHRA…KNHKDVAIVV (148 aa)).

This sequence belongs to the PurH family.

It carries out the reaction (6R)-10-formyltetrahydrofolate + 5-amino-1-(5-phospho-beta-D-ribosyl)imidazole-4-carboxamide = 5-formamido-1-(5-phospho-D-ribosyl)imidazole-4-carboxamide + (6S)-5,6,7,8-tetrahydrofolate. It catalyses the reaction IMP + H2O = 5-formamido-1-(5-phospho-D-ribosyl)imidazole-4-carboxamide. The protein operates within purine metabolism; IMP biosynthesis via de novo pathway; 5-formamido-1-(5-phospho-D-ribosyl)imidazole-4-carboxamide from 5-amino-1-(5-phospho-D-ribosyl)imidazole-4-carboxamide (10-formyl THF route): step 1/1. It participates in purine metabolism; IMP biosynthesis via de novo pathway; IMP from 5-formamido-1-(5-phospho-D-ribosyl)imidazole-4-carboxamide: step 1/1. This chain is Bifunctional purine biosynthesis protein PurH, found in Vibrio cholerae serotype O1 (strain M66-2).